Here is a 259-residue protein sequence, read N- to C-terminus: Putative aldolase class 2 protein PA3430 (259 aa).

Zn(2+)-binding residues include histidine 113, histidine 115, and histidine 176.

The protein belongs to the aldolase class II family. Zn(2+) serves as cofactor.

The chain is Putative aldolase class 2 protein PA3430 from Pseudomonas aeruginosa (strain ATCC 15692 / DSM 22644 / CIP 104116 / JCM 14847 / LMG 12228 / 1C / PRS 101 / PAO1).